We begin with the raw amino-acid sequence, 303 residues long: Paired immunoglobulin-like type 2 receptor alpha (303 aa).

Positions 1–19 are cleaved as a signal peptide; it reads MGRPLLLPLLPLLLPPAFL. At 20–197 the chain is on the extracellular side; sequence QPSGSTGSGP…DSWHISLETA (178 aa). One can recognise an Ig-like V-type domain in the interval 32-150; the sequence is LYGVTQPKHL…SIEGTKLSIT (119 aa). N-linked (GlcNAc...) asparagine glycosylation is present at asparagine 100. A helical membrane pass occupies residues 198–218; it reads VGVAVAVTVLGIMILGLICLL. Topologically, residues 219–303 are cytoplasmic; the sequence is RWRRRKGQQR…NETLYSVLKA (85 aa). The segment at 226–296 is disordered; that stretch reads QQRTKATTPA…RPLKSPQNET (71 aa). 2 short sequence motifs (ITIM motif) span residues 267–272 and 296–301; these read IVYASL and TLYSVL.

As to quaternary structure, monomer. Interacts with PTPN6/SHP-1 and PTPN11/SHP-2 upon tyrosine phosphorylation. In terms of assembly, (Microbial infection) Interacts with herpes simplex virus 1 glycoprotein B. According to PubMed:10660620, N- and O-glycosylated. According to PubMed:10903717, only N-glycosylated. In terms of processing, phosphorylated on tyrosine residues. Predominantly detected in hemopoietic tissues and is expressed by monocytes, macrophages, and granulocytes, but not by lymphocytes. Also strongly expressed by dendritic cells (DC); preferentially by CD14+/CD1a- DC derived from CD34+ progenitors. Also expressed by CD11c+ blood and tonsil DC, but not by CD11c- DC precursors.

It localises to the cell membrane. Its subcellular location is the secreted. Its function is as follows. Paired receptors consist of highly related activating and inhibitory receptors and are widely involved in the regulation of the immune system. PILRA is thought to act as a cellular signaling inhibitory receptor by recruiting cytoplasmic phosphatases like PTPN6/SHP-1 and PTPN11/SHP-2 via their SH2 domains that block signal transduction through dephosphorylation of signaling molecules. Receptor for PIANP. In terms of biological role, (Microbial infection) Acts as an entry co-receptor for herpes simplex virus 1. The protein is Paired immunoglobulin-like type 2 receptor alpha (PILRA) of Homo sapiens (Human).